Reading from the N-terminus, the 305-residue chain is Olfactory receptor 9G1 (305 aa).

Residues 1 to 24 (MQRSNHTVTEFILLGFTTDPGMQL) lie on the Extracellular side of the membrane. N-linked (GlcNAc...) asparagine glycosylation is present at Asn5. The helical transmembrane segment at 25–45 (GLFVVFLGVYSLTVVGNSTLI) threads the bilayer. Over 46–53 (VLICNDSC) the chain is Cytoplasmic. Residues 54-74 (LHTPMYFFTGNLSFLDLWYSS) form a helical membrane-spanning segment. Topologically, residues 75–98 (VYTPKILVTCISEDKSISFAGCLC) are extracellular. A disulfide bridge connects residues Cys96 and Cys188. A helical membrane pass occupies residues 99–119 (QFFFSAGLAYSECYLLAAVAY). Residues 120-138 (DRYVAISKPLLYAQAMSIK) lie on the Cytoplasmic side of the membrane. Residues 139-159 (LCALLVAVSYCGGFINSSIIT) form a helical membrane-spanning segment. The Extracellular portion of the chain corresponds to 160 to 196 (KKTFSFNFCRENIIDDFFCDLLPLVELACGEKGGYKI). A helical membrane pass occupies residues 197-216 (MMYFLLASNVICPAVLILAS). The Cytoplasmic portion of the chain corresponds to 217–236 (YLFIITSVLRISSSKGYLKA). A helical membrane pass occupies residues 237-257 (FSTCSSHLTSVTLYYGSILYI). At 258–270 (YALPRSSYSFDMD) the chain is on the extracellular side. Residues 271–291 (KIVSTFYTVVFPMLNLMIYSL) form a helical membrane-spanning segment. Residues 292–305 (RNKDVKEALKKLLP) are Cytoplasmic-facing.

Belongs to the G-protein coupled receptor 1 family.

The protein localises to the cell membrane. Odorant receptor. This is Olfactory receptor 9G1 (OR9G1) from Homo sapiens (Human).